Here is a 157-residue protein sequence, read N- to C-terminus: Large ribosomal subunit protein eL29 (157 aa).

Positions 1 to 26 are enriched in basic residues; sequence MAKSKNHTTHNQSRKWHRNGIKKPRS. The disordered stretch occupies residues 1–32; it reads MAKSKNHTTHNQSRKWHRNGIKKPRSQRYESL. An N6-methyllysine modification is found at K5. S31 carries the post-translational modification Phosphoserine. N6-acetyllysine is present on K33. The interval 121-157 is disordered; it reads PKAKAKAKDQTKAQAAAPASIPAQAPKGAQATTKATE. Low complexity predominate over residues 132 to 147; the sequence is KAQAAAPASIPAQAPK. Position 140 is a phosphoserine (S140).

This sequence belongs to the eukaryotic ribosomal protein eL29 family. As to quaternary structure, component of the large ribosomal subunit.

It is found in the cytoplasm. Component of the large ribosomal subunit. The ribosome is a large ribonucleoprotein complex responsible for the synthesis of proteins in the cell. This Macaca fascicularis (Crab-eating macaque) protein is Large ribosomal subunit protein eL29 (RPL29).